Consider the following 226-residue polypeptide: MKITVLSLFENFFNEFKNTSIIKKAIANNLVDIEIVNFRNFSKDSHNKVDDTPYGGGAGMVLTLQPIVDAINHVKTSNSKVVLLTPSGKTYNQQIANQFKTFEHLILICGHYEGFDERIINYVDYEISIGDYILTGGEIAAMAILDSVIRLIPNVISVNSLESESFDNNLLDYPNYTKPYNFNGYKVPEVLLSGNHKEINKVRKEWQINKTKINRKDLFIKYLKEN.

S-adenosyl-L-methionine is bound by residues G110 and 129–134 (IGDYIL).

This sequence belongs to the RNA methyltransferase TrmD family. In terms of assembly, homodimer.

The protein localises to the cytoplasm. The enzyme catalyses guanosine(37) in tRNA + S-adenosyl-L-methionine = N(1)-methylguanosine(37) in tRNA + S-adenosyl-L-homocysteine + H(+). In terms of biological role, specifically methylates guanosine-37 in various tRNAs. The polypeptide is tRNA (guanine-N(1)-)-methyltransferase (Malacoplasma penetrans (strain HF-2) (Mycoplasma penetrans)).